Reading from the N-terminus, the 222-residue chain is MTRLVLGSASPGRLKVLRDAGIEPLVIASHVDEDVVIAALGPDAVPSDVVCVLAAAKAAQVATTLTGTQRIVAADCVVVACDSMLYIEGRLLGKPASIDEAREQWRSMAGRAGQLYTGHGVIRLQDNKTVYRSAETAITTVYFGTPSASDLEAYLASGESLRVAGGFTLDGLGGWFIDGVQGNPSNVIGLSLPLLRSLVQRCGLSVAALWAGNAGGPAHKQQ.

The active-site Proton acceptor is the Asp-82.

It belongs to the Maf family. It depends on a divalent metal cation as a cofactor.

It localises to the cytoplasm. It catalyses the reaction a ribonucleoside 5'-triphosphate + H2O = a ribonucleoside 5'-phosphate + diphosphate + H(+). The catalysed reaction is a 2'-deoxyribonucleoside 5'-triphosphate + H2O = a 2'-deoxyribonucleoside 5'-phosphate + diphosphate + H(+). Its function is as follows. Nucleoside triphosphate pyrophosphatase. May have a dual role in cell division arrest and in preventing the incorporation of modified nucleotides into cellular nucleic acids. The polypeptide is Nucleoside triphosphate pyrophosphatase (Mycobacterium bovis (strain ATCC BAA-935 / AF2122/97)).